The sequence spans 131 residues: Small ribosomal subunit protein eS17 (131 aa).

Belongs to the eukaryotic ribosomal protein eS17 family.

The protein is Small ribosomal subunit protein eS17 (RpS17) of Drosophila melanogaster (Fruit fly).